Here is a 177-residue protein sequence, read N- to C-terminus: Large ribosomal subunit protein uL6 (177 aa).

It belongs to the universal ribosomal protein uL6 family. Part of the 50S ribosomal subunit.

In terms of biological role, this protein binds to the 23S rRNA, and is important in its secondary structure. It is located near the subunit interface in the base of the L7/L12 stalk, and near the tRNA binding site of the peptidyltransferase center. The protein is Large ribosomal subunit protein uL6 of Haemophilus influenzae (strain 86-028NP).